A 205-amino-acid polypeptide reads, in one-letter code: High frequency lysogenization protein HflD homolog (205 aa).

This sequence belongs to the HflD family.

It is found in the cytoplasm. The protein localises to the cell inner membrane. In Hahella chejuensis (strain KCTC 2396), this protein is High frequency lysogenization protein HflD homolog.